A 258-amino-acid chain; its full sequence is 14-3-3 protein 6 (258 aa).

The tract at residues 238–258 (DMQDDGTDEIKEATPKPDDNE) is disordered. The span at 245 to 258 (DEIKEATPKPDDNE) shows a compositional bias: basic and acidic residues.

It belongs to the 14-3-3 family. In terms of assembly, homodimer.

The chain is 14-3-3 protein 6 (TFT6) from Solanum lycopersicum (Tomato).